The chain runs to 408 residues: Arginine biosynthesis bifunctional protein ArgJ (408 aa).

Positions 156, 182, 193, 279, 403, and 408 each coordinate substrate. Thr193 serves as the catalytic Nucleophile.

The protein belongs to the ArgJ family. In terms of assembly, heterotetramer of two alpha and two beta chains.

Its subcellular location is the cytoplasm. The enzyme catalyses N(2)-acetyl-L-ornithine + L-glutamate = N-acetyl-L-glutamate + L-ornithine. The catalysed reaction is L-glutamate + acetyl-CoA = N-acetyl-L-glutamate + CoA + H(+). Its pathway is amino-acid biosynthesis; L-arginine biosynthesis; L-ornithine and N-acetyl-L-glutamate from L-glutamate and N(2)-acetyl-L-ornithine (cyclic): step 1/1. The protein operates within amino-acid biosynthesis; L-arginine biosynthesis; N(2)-acetyl-L-ornithine from L-glutamate: step 1/4. Its function is as follows. Catalyzes two activities which are involved in the cyclic version of arginine biosynthesis: the synthesis of N-acetylglutamate from glutamate and acetyl-CoA as the acetyl donor, and of ornithine by transacetylation between N(2)-acetylornithine and glutamate. This chain is Arginine biosynthesis bifunctional protein ArgJ, found in Methylococcus capsulatus (strain ATCC 33009 / NCIMB 11132 / Bath).